The primary structure comprises 419 residues: Acyl-coenzyme A thioesterase 1 (419 aa).

Active-site charge relay system residues include serine 232, aspartate 324, and histidine 358. Position 416 is a phosphoserine (serine 416).

This sequence belongs to the C/M/P thioester hydrolase family. As to quaternary structure, monomer. Expressed in liver.

The protein resides in the cytoplasm. It is found in the cytosol. It carries out the reaction hexadecanoyl-CoA + H2O = hexadecanoate + CoA + H(+). The enzyme catalyses dodecanoyl-CoA + H2O = dodecanoate + CoA + H(+). It catalyses the reaction tetradecanoyl-CoA + H2O = tetradecanoate + CoA + H(+). The catalysed reaction is decanoyl-CoA + H2O = decanoate + CoA + H(+). It carries out the reaction octadecanoyl-CoA + H2O = octadecanoate + CoA + H(+). The enzyme catalyses eicosanoyl-CoA + H2O = eicosanoate + CoA + H(+). It catalyses the reaction (9Z)-octadecenoyl-CoA + H2O = (9Z)-octadecenoate + CoA + H(+). The catalysed reaction is (9Z)-hexadecenoyl-CoA + H2O = (9Z)-hexadecenoate + CoA + H(+). It carries out the reaction (9E)-octadecenoyl-CoA + H2O = (9E)-octadecenoate + CoA + H(+). Its pathway is lipid metabolism; fatty acid metabolism. Functionally, catalyzes the hydrolysis of acyl-CoAs into free fatty acids and coenzyme A (CoASH), regulating their respective intracellular levels. More active towards saturated and unsaturated long chain fatty acyl-CoAs (C12-C20). The protein is Acyl-coenzyme A thioesterase 1 (Acot1) of Rattus norvegicus (Rat).